The sequence spans 101 residues: Small ribosomal subunit protein uS14 (101 aa).

The protein belongs to the universal ribosomal protein uS14 family. In terms of assembly, part of the 30S ribosomal subunit. Contacts proteins S3 and S10.

In terms of biological role, binds 16S rRNA, required for the assembly of 30S particles and may also be responsible for determining the conformation of the 16S rRNA at the A site. In Chelativorans sp. (strain BNC1), this protein is Small ribosomal subunit protein uS14.